A 231-amino-acid polypeptide reads, in one-letter code: VIGGDECNINEHRFLALVYANGSLCGGTLINQEWVLTARHCDRGNMRIYLGMHNLKVLNKDALRRFPKEKYFCLNTRNDTIWDKDIMLIRLNRPVRNSAHIAPLSLPSNPPSVGSVCRIMGWGTITSPNATLPDVPHCANINILDYAVCQAAYKGLAATTLCAGILEGGKDTCKGDSGGPLICNGQFQGILSVGGNPCAQPRKPGIYTKVFDYTDWIQSIISGNTDATCPP.

The 222-residue stretch at 1–222 (VIGGDECNIN…YTDWIQSIIS (222 aa)) folds into the Peptidase S1 domain. Disulfide bonds link C7–C138, C25–C41, C73–C229, C117–C183, C149–C162, and C173–C198. N21 carries an N-linked (GlcNAc...) asparagine glycan. H40 (charge relay system) is an active-site residue. N-linked (GlcNAc...) asparagine glycosylation is present at N78. D85 functions as the Charge relay system in the catalytic mechanism. An N-linked (GlcNAc...) asparagine glycan is attached at N129. The active-site Charge relay system is the S177.

It belongs to the peptidase S1 family. Snake venom subfamily. As to quaternary structure, monomer. In terms of tissue distribution, expressed by the venom gland.

The protein resides in the secreted. In terms of biological role, snake venom serine protease that selectively cleaves the heavy chain of protein C (PROC). This activation is thrombomodulin-independent. The chain is Protein C activator from Agkistrodon contortrix contortrix (Southern copperhead).